The following is a 200-amino-acid chain: ASI1-immunoprecipitated protein 1 (200 aa).

One can recognise an RRM domain in the interval 18–101; it reads RTVYVDELTP…RPVRACAAEP (84 aa).

In terms of assembly, component of the ASI1-AIPP1-EDM2 (AAE) RNA regulatory complex composed of at least AIPP1/EDM3, ASI1 and EDM2 and may contain CPL2, AIPP2 and AIPP3/BDT1. Binds directly to ASI1 and EDM2 and may function as a bridge protein between them. Co-associates with EDM2 to histone H3 lysine 9 dimethylation (H3K9me2)-marked chromatin and transcripts at a critical proximal polyadenylation site of RPP7 to hamper proximal transcript polyadeylation/termination.

The protein resides in the nucleus. Its function is as follows. Prevents gene silencing by suppressing CHG methylation as well as histone H3 lysine 9 dimethylation (H3K9me2) status at target loci. Collaboratively with ASI1 and EDM2, the AAE complex regulates alternative RNA processing (e.g. alternative splicing) and epigenetic silencing (e.g. H3K9me2) of intronic heterochromatin-containing genes as well as genic heterochromatin-containing genes by promoting distal 3' polyadenylation, thus being required for the accumulation of their full-length transcripts. May also modulate transposable elements (TE) expression. Mediates RPP7-dependent race-specific disease resistance by promoting histone H3 lysine 9 dimethylation (H3K9me2) at the proximal RPP7 polyadenylation site, thus controlling alternative polyadenylation of RPP7 immune receptor transcripts and facilitating 2-phosphoserine RNAPII occupancy. In cv. Columbia, required for RPP7-dependent disease resistance against the Hyaloperonospora arabidopsidis isolate Hiks1. This Arabidopsis thaliana (Mouse-ear cress) protein is ASI1-immunoprecipitated protein 1.